We begin with the raw amino-acid sequence, 499 residues long: Nucleoside transporter 2 (499 aa).

Topologically, residues 1–30 (MTGQSAAVEGSNSALPWYRMGFHTLAEFNT) are cytoplasmic. The next 5 helical transmembrane spans lie at 31–51 (YVTF…VTSA), 112–132 (LFLG…VPAA), 133–153 (TIPT…MGGL), 179–199 (WGLT…QVSM), and 212–232 (IYFG…VLLR). Over residues 255-267 (VEPEESQDSKEPA) the composition is skewed to basic and acidic residues. Residues 255–276 (VEPEESQDSKEPATGDVAEAPK) form a disordered region. N-linked (GlcNAc...) asparagine glycosylation is present at asparagine 326. The next 5 membrane-spanning stretches (helical) occupy residues 350–370 (LCAF…FFLV), 378–398 (MTII…LLMI), 406–426 (KLVI…VLCV), 428–448 (GFIP…LTNG), and 475–495 (MLAG…SLAI).

It belongs to the SLC29A/ENT transporter (TC 2.A.57) family.

The protein localises to the cell membrane. It localises to the cell projection. It is found in the cilium. Its subcellular location is the flagellum. The catalysed reaction is inosine(in) + H(+)(in) = inosine(out) + H(+)(out). The enzyme catalyses guanosine(in) + H(+)(in) = guanosine(out) + H(+)(out). It catalyses the reaction xanthosine(in) + H(+)(in) = xanthosine(out) + H(+)(out). Functionally, high affinity nucleoside:H(+) symporter; transports inosine and guanosine. Can transport xanthosine. This is Nucleoside transporter 2 from Leishmania donovani.